A 315-amino-acid chain; its full sequence is DNA-directed RNA polymerase subunit alpha (315 aa).

The tract at residues 1–228 is alpha N-terminal domain (alpha-NTD); the sequence is MLEIEKPKIE…EHLRLFIGLT (228 aa). The alpha C-terminal domain (alpha-CTD) stretch occupies residues 246–315; that stretch reads DKILEMTIEE…LGLSLRQEDE (70 aa).

This sequence belongs to the RNA polymerase alpha chain family. Homodimer. The RNAP catalytic core consists of 2 alpha, 1 beta, 1 beta' and 1 omega subunit. When a sigma factor is associated with the core the holoenzyme is formed, which can initiate transcription.

It catalyses the reaction RNA(n) + a ribonucleoside 5'-triphosphate = RNA(n+1) + diphosphate. Its function is as follows. DNA-dependent RNA polymerase catalyzes the transcription of DNA into RNA using the four ribonucleoside triphosphates as substrates. The polypeptide is DNA-directed RNA polymerase subunit alpha (Desulforamulus reducens (strain ATCC BAA-1160 / DSM 100696 / MI-1) (Desulfotomaculum reducens)).